A 165-amino-acid chain; its full sequence is Nascent polypeptide-associated complex subunit beta (165 aa).

2 disordered regions span residues 1 to 34 and 133 to 165; these read MDQA…TSGA and QNMQ…KSVD. A compositionally biased stretch (basic residues) spans 20 to 30; the sequence is TPRRKVKKVHK. An NAC-A/B domain is found at 33 to 110; the sequence is GADDKKLQAT…GEEKELTELV (78 aa). Residues 145 to 158 are compositionally biased toward acidic residues; sequence DDDEDDIPDLVEGE.

It belongs to the NAC-beta family. As to quaternary structure, part of the nascent polypeptide-associated complex (NAC), consisting of egd2 and egd1. NAC associates with ribosomes via egd1.

It localises to the cytoplasm. The protein localises to the nucleus. Functionally, component of the nascent polypeptide-associated complex (NAC), a dynamic component of the ribosomal exit tunnel, protecting the emerging polypeptides from interaction with other cytoplasmic proteins to ensure appropriate nascent protein targeting. The NAC complex also promotes mitochondrial protein import by enhancing productive ribosome interactions with the outer mitochondrial membrane and blocks the inappropriate interaction of ribosomes translating non-secretory nascent polypeptides with translocation sites in the membrane of the endoplasmic reticulum. EGD1 may act as a transcription factor that exert a negative effect on the expression of several genes that are transcribed by RNA polymerase II. In Emericella nidulans (strain FGSC A4 / ATCC 38163 / CBS 112.46 / NRRL 194 / M139) (Aspergillus nidulans), this protein is Nascent polypeptide-associated complex subunit beta (egd1).